A 663-amino-acid polypeptide reads, in one-letter code: MIDKRDDKPFKLKSKYKPSGDQPQAIESLVDNIEGGEKAQILLGATGTGKTYTMSQVISKVNKPTLVIAHNKTLAGQLYGEFKEFFPDNAVEYFVSYYDYYQPEAYVPSSDTYIEKDSSVNDEIDKLRHSATSSLLERNDVIVVASVSCIYGLGSPKEYADSAVSLRPGQEISRDTLLNQLVDIQFERNDIDFQRGCFRVRGDVVEVFPASRDEHAFRVEFFGDEIDRICEIESLTGKTIGEVDHLVLFPATHFVTNDEHMEQSIAKIQAELAEQLQLFESEGKLLEAQRLRQRTEYDIEMLREMGYTSGVENYSRHMDGRSPGEPPYTLLDFFPEDFLIMIDESHMTMGQIKGMYNGDQARKQMLVDYGFRLPSALDNRPLRREEFESHVHQIIYVSATPGEYEMSQTNTIIEQIIRPTGLLDPEIDVRPSMGQMDDLLGEINQRVARDERTFITTLTKKMAEDLTDYLKEMGVKVKYMHSDIKTLERTEIIRDLRLGVFDVLIGINLLREGIDVPEVSLVAILDADKEGFLRNERGLIQTIGRAARNVDGHVIMYADKMTDSMQRAIDETARRREIQIAYNKAHGIVPQTIKKDIRGLISISKTSHNDISKEEMDYESMSRGERKEAINALQKQMQEAAELLDFELAAQMRDLILELKLMD.

Positions 1-10 (MIDKRDDKPF) are enriched in basic and acidic residues. The interval 1–23 (MIDKRDDKPFKLKSKYKPSGDQP) is disordered. One can recognise a Helicase ATP-binding domain in the interval 31 to 418 (DNIEGGEKAQ…TNTIIEQIIR (388 aa)). 44–51 (GATGTGKT) provides a ligand contact to ATP. The Beta-hairpin signature appears at 97 to 120 (YYDYYQPEAYVPSSDTYIEKDSSV). The region spanning 435 to 601 (QMDDLLGEIN…TIKKDIRGLI (167 aa)) is the Helicase C-terminal domain. The UVR domain occupies 627–662 (KEAINALQKQMQEAAELLDFELAAQMRDLILELKLM).

The protein belongs to the UvrB family. As to quaternary structure, forms a heterotetramer with UvrA during the search for lesions. Interacts with UvrC in an incision complex.

It is found in the cytoplasm. In terms of biological role, the UvrABC repair system catalyzes the recognition and processing of DNA lesions. A damage recognition complex composed of 2 UvrA and 2 UvrB subunits scans DNA for abnormalities. Upon binding of the UvrA(2)B(2) complex to a putative damaged site, the DNA wraps around one UvrB monomer. DNA wrap is dependent on ATP binding by UvrB and probably causes local melting of the DNA helix, facilitating insertion of UvrB beta-hairpin between the DNA strands. Then UvrB probes one DNA strand for the presence of a lesion. If a lesion is found the UvrA subunits dissociate and the UvrB-DNA preincision complex is formed. This complex is subsequently bound by UvrC and the second UvrB is released. If no lesion is found, the DNA wraps around the other UvrB subunit that will check the other stand for damage. The polypeptide is UvrABC system protein B (Streptococcus pyogenes serotype M28 (strain MGAS6180)).